We begin with the raw amino-acid sequence, 135 residues long: uncharacterized protein (135 aa).

Transmembrane regions (helical) follow at residues 13–35 (AKVI…AMYL), 82–101 (VAVF…LLSI), and 108–130 (IYRI…PLIL).

It is found in the cell membrane. This is an uncharacterized protein from Archaeoglobus fulgidus (strain ATCC 49558 / DSM 4304 / JCM 9628 / NBRC 100126 / VC-16).